The primary structure comprises 473 residues: Bactericidal permeability-increasing protein (473 aa).

Residues M1–S18 form the signal peptide. A central sheet, part 1 region spans residues I19–G29. The tract at residues T28–L209 is N-terminal barrel. The cysteines at positions 153 and 192 are disulfide-linked. A central sheet, part 2 region spans residues V211–S275. The tract at residues M225–T230 is cleavage sites for elastase. The C-terminal barrel stretch occupies residues A276–L446. An N-linked (GlcNAc...) asparagine glycan is attached at N365. The interval N453–T472 is central sheet, part 3.

Belongs to the BPI/LBP/Plunc superfamily. BPI/LBP family. Monomer. Homodimer; disulfide-linked. Expressed in spleen. Lower expression in gill, head kidney, entire kidney, skin, intestine and blood and lowest expression in liver and muscle.

Its subcellular location is the secreted. The cytotoxic action of BPI is limited to many species of Gram-negative bacteria; this specificity may be explained by a strong affinity of the very basic N-terminal half for the negatively charged lipopolysaccharides that are unique to the Gram-negative bacterial outer envelope. Exhibits neutralizing capacity towards P.aeruginosa lipopolysaccharides (LPS) and has bactericidal activity against multiple drug resistant (MDR) P.aeruginosa strains derived from people with cystic fibrosis. Has antibacterial activity against E.coli, but not against S.iniae. This Sebastes schlegelii (Korean rockfish) protein is Bactericidal permeability-increasing protein.